Reading from the N-terminus, the 331-residue chain is Flavonol synthase 1 (331 aa).

In terms of domain architecture, Fe2OG dioxygenase spans 191–292 (DAIELLLKIN…RMSWPVFCSP (102 aa)). Fe cation-binding residues include His217, Asp219, and His273. Residue Arg283 participates in 2-oxoglutarate binding.

The protein belongs to the iron/ascorbate-dependent oxidoreductase family. The cofactor is L-ascorbate. Requires Fe(2+) as cofactor. Expressed in young cromes.

It catalyses the reaction a (2R,3R)-dihydroflavonol + 2-oxoglutarate + O2 = a flavonol + succinate + CO2 + H2O. The enzyme catalyses (2R,3R)-dihydrokaempferol + 2-oxoglutarate + O2 = kaempferol + succinate + CO2 + H2O + H(+). The catalysed reaction is (2R,3R)-dihydroquercetin + 2-oxoglutarate + O2 = quercetin + succinate + CO2 + H2O + H(+). It carries out the reaction (2R,3R)-dihydromyricetin + 2-oxoglutarate + O2 = myricetin + succinate + CO2 + H2O + H(+). It participates in flavonoid metabolism. Functionally, catalyzes the formation of flavonols from dihydroflavonols. Can act on dihydrokaempferol to produce kaempferol, on dihydroquercetin to produce quercitin and on dihydromyricetin to produce myricetin. The sequence is that of Flavonol synthase 1 from Crocosmia x crocosmiiflora (Montbretia).